The chain runs to 350 residues: tRNA uridine(34) hydroxylase (350 aa).

The region spanning 146–240 is the Rhodanese domain; sequence DDPEAVFVDM…YARRAREQGL (95 aa). The active-site Cysteine persulfide intermediate is Cys-200.

This sequence belongs to the TrhO family.

The catalysed reaction is uridine(34) in tRNA + AH2 + O2 = 5-hydroxyuridine(34) in tRNA + A + H2O. In terms of biological role, catalyzes oxygen-dependent 5-hydroxyuridine (ho5U) modification at position 34 in tRNAs. This is tRNA uridine(34) hydroxylase from Erwinia tasmaniensis (strain DSM 17950 / CFBP 7177 / CIP 109463 / NCPPB 4357 / Et1/99).